A 671-amino-acid polypeptide reads, in one-letter code: Pescadillo homolog (671 aa).

Residues 317-403 form the BRCT domain; that stretch reads KVRELFRGLT…LMLPVTGYRI (87 aa). A coiled-coil region spans residues 548-584; the sequence is QALRKAQEKSRQTETSEARLQRKMSEVKRQEAATRKM. 2 disordered regions span residues 552–578 and 643–671; these read KAQE…KRQE and RRQR…KWVQ.

Belongs to the pescadillo family.

Its subcellular location is the nucleus. The protein localises to the nucleolus. It localises to the nucleoplasm. Functionally, required for maturation of ribosomal RNAs and formation of the large ribosomal subunit. This is Pescadillo homolog from Leishmania infantum.